The following is an 89-amino-acid chain: FXYD domain-containing ion transport regulator 4 (89 aa).

The N-terminal stretch at 1–20 is a signal peptide; sequence MERVTLALLLLAGLTALEAN. Topologically, residues 21-38 are extracellular; the sequence is DPFANKDDPFYYDWKNLQ. The chain crosses the membrane as a helical span at residues 39 to 59; the sequence is LSGLICGGLLAIAGIAAVLSG. Over 60–89 the chain is Cytoplasmic; it reads KCKCKSSQKQHSPVPEKAIPLITPGSATTC.

The protein belongs to the FXYD family. As to quaternary structure, regulatory subunit of the sodium/potassium-transporting ATPase which is composed of a catalytic alpha subunit, a non-catalytic beta subunit and a regulatory subunit. The regulatory subunit, a member of the FXYD protein family, modulates the enzymatic activity in a tissue- and isoform-specific way by changing affinities of the Na+/K+-ATPase toward Na(+), K(+) or ATP.

The protein resides in the cell membrane. The protein localises to the basolateral cell membrane. Its function is as follows. Associates with and regulates the activity of the sodium/potassium-transporting ATPase (NKA) which catalyzes the hydrolysis of ATP coupled with the exchange of Na(+) and K(+) ions across the plasma membrane. Increases the apparent affinity of the transporter for Na(+) and increases NKA activity. This is FXYD domain-containing ion transport regulator 4 (FXYD4) from Homo sapiens (Human).